We begin with the raw amino-acid sequence, 283 residues long: Nucleotide-binding protein ACIAD3059 (283 aa).

9–16 (GQSGSGKS) is an ATP binding site. GTP is bound at residue 59–62 (DVRS).

The protein belongs to the RapZ-like family.

Displays ATPase and GTPase activities. The sequence is that of Nucleotide-binding protein ACIAD3059 from Acinetobacter baylyi (strain ATCC 33305 / BD413 / ADP1).